The chain runs to 308 residues: GTP cyclohydrolase FolE2 (308 aa).

The protein belongs to the GTP cyclohydrolase IV family.

The catalysed reaction is GTP + H2O = 7,8-dihydroneopterin 3'-triphosphate + formate + H(+). Its pathway is cofactor biosynthesis; 7,8-dihydroneopterin triphosphate biosynthesis; 7,8-dihydroneopterin triphosphate from GTP: step 1/1. Converts GTP to 7,8-dihydroneopterin triphosphate. The polypeptide is GTP cyclohydrolase FolE2 (Colwellia psychrerythraea (strain 34H / ATCC BAA-681) (Vibrio psychroerythus)).